The following is a 369-amino-acid chain: uncharacterized protein (369 aa).

The next 9 membrane-spanning stretches (helical) occupy residues 25-45 (QWVILASFLVIVNLISLTVHW), 47-67 (FGLLLISCSAALLAYCQLMPE), 119-139 (LNIVHLFVISGFHLSFLFGVM), 152-172 (ITGFVMLLLYLFLVGFAFSAL), 206-226 (GALHNFGFNFSFLACFVLFAI), 235-255 (LQAVLTSTLILIVVSPITLHL), 268-288 (LLFTPIALFYFCASWLLLPLI), 295-315 (LVGFYWPLPWLSQWALNTTVF), and 323-343 (WVFYLVYYGLWGLLYTVGTVF).

The protein to B.subtilis ComEC.

Its subcellular location is the cell membrane. This is an uncharacterized protein from Mycoplasma pneumoniae (strain ATCC 29342 / M129 / Subtype 1) (Mycoplasmoides pneumoniae).